A 4367-amino-acid chain; its full sequence is Guanylate cyclase (4367 aa).

The segment covering methionine 1–glutamate 10 has biased composition (polar residues). The tract at residues methionine 1–glutamine 70 is disordered. Residues methionine 1–arginine 150 lie on the Cytoplasmic side of the membrane. Basic and acidic residues predominate over residues proline 19–alanine 33. Residues histidine 54–phenylalanine 63 are compositionally biased toward polar residues. A helical membrane pass occupies residues valine 151–asparagine 171. At proline 172–histidine 174 the chain is on the extracellular side. Residues alanine 175 to phenylalanine 195 form a helical membrane-spanning segment. At threonine 196 to aspartate 373 the chain is on the cytoplasmic side. Residues isoleucine 374–methionine 394 form a helical membrane-spanning segment. The Extracellular portion of the chain corresponds to serine 395 to arginine 452. The interval arginine 402–serine 426 is disordered. The span at threonine 407–serine 426 shows a compositional bias: low complexity. Residues phenylalanine 453 to tyrosine 473 form a helical membrane-spanning segment. Residues leucine 474–valine 2258 are Cytoplasmic-facing. Disordered regions lie at residues isoleucine 486 to leucine 535, serine 550 to arginine 699, glutamate 831 to leucine 918, arginine 932 to alanine 966, valine 980 to serine 1047, glycine 1079 to valine 1164, proline 1344 to serine 1593, phenylalanine 1607 to glycine 1652, glycine 1773 to serine 1861, and aspartate 1881 to leucine 1946. Over residues alanine 523 to leucine 535 the composition is skewed to polar residues. 2 stretches are compositionally biased toward basic and acidic residues: residues glutamate 605–leucine 628 and arginine 670–serine 679. Positions serine 850–alanine 863 are enriched in low complexity. Positions glutamine 880 to proline 892 are enriched in polar residues. Residues alanine 906–serine 917 are compositionally biased toward low complexity. The segment covering arginine 932–arginine 948 has biased composition (basic and acidic residues). Over residues glutamine 983–glutamine 996 the composition is skewed to low complexity. Positions aspartate 1025–serine 1047 are enriched in basic and acidic residues. Composition is skewed to polar residues over residues serine 1084–serine 1094 and arginine 1117–proline 1130. Residues proline 1344 to proline 1357 are compositionally biased toward low complexity. Composition is skewed to gly residues over residues glutamine 1370–glycine 1381 and cysteine 1389–glycine 1400. Positions valine 1443–proline 1454 are enriched in pro residues. Basic and acidic residues predominate over residues serine 1527–aspartate 1542. Positions threonine 1543 to glutamate 1567 are enriched in acidic residues. A compositionally biased stretch (low complexity) spans serine 1583 to serine 1593. Composition is skewed to polar residues over residues glycine 1628–glycine 1652, valine 1779–lysine 1791, and valine 1843–glutamine 1852. Residues aspartate 1881–alanine 1922 show a composition bias toward basic and acidic residues. The span at arginine 1933–leucine 1942 shows a compositional bias: polar residues. The helical transmembrane segment at serine 2259–phenylalanine 2279 threads the bilayer. Residues glutamine 2280 to glutamate 2289 are Extracellular-facing. Residues valine 2290–isoleucine 2310 form a helical membrane-spanning segment. The Cytoplasmic portion of the chain corresponds to histidine 2311–arginine 2343. The helical transmembrane segment at phenylalanine 2344–alanine 2364 threads the bilayer. Residues threonine 2365–glutamine 2376 are Extracellular-facing. The chain crosses the membrane as a helical span at residues valine 2377–valine 2397. Topologically, residues arginine 2398 to proline 2408 are cytoplasmic. The chain crosses the membrane as a helical span at residues threonine 2409–tyrosine 2429. Over serine 2430–arginine 2444 the chain is Extracellular. A helical membrane pass occupies residues valine 2445–leucine 2465. Over valine 2466 to valine 2724 the chain is Cytoplasmic. The chain crosses the membrane as a helical span at residues isoleucine 2725–isoleucine 2745. Residues histidine 2746–threonine 2762 lie on the Extracellular side of the membrane. A helical membrane pass occupies residues leucine 2763–leucine 2783. Residues aspartate 2784 to histidine 2785 lie on the Cytoplasmic side of the membrane. The chain crosses the membrane as a helical span at residues phenylalanine 2786–threonine 2806. Topologically, residues alanine 2807–threonine 2823 are extracellular. Residues phenylalanine 2824–valine 2844 traverse the membrane as a helical segment. Over threonine 2845 to proline 2858 the chain is Cytoplasmic. The helical transmembrane segment at leucine 2859–glycine 2879 threads the bilayer. The Extracellular segment spans residues tyrosine 2880–glutamine 2903. A helical transmembrane segment spans residues arginine 2904–leucine 2924. Residues asparagine 2925–asparagine 3693 lie on the Cytoplasmic side of the membrane. The Guanylate cyclase 1 domain occupies serine 2942–lysine 3150. Disordered regions lie at residues aspartate 3214–glycine 3245, glycine 3359–aspartate 3402, serine 3456–leucine 3475, glutamine 3485–threonine 3508, glycine 3523–lysine 3596, and phenylalanine 3620–glutamate 3653. Basic and acidic residues predominate over residues arginine 3383–aspartate 3402. Composition is skewed to basic and acidic residues over residues glutamine 3485–glycine 3499, glutamate 3529–glutamate 3541, and threonine 3549–glutamate 3569. Positions alanine 3626–alanine 3637 are enriched in low complexity. The chain crosses the membrane as a helical span at residues isoleucine 3694–threonine 3714. The Extracellular segment spans residues arginine 3715 to threonine 3736. Residues glycine 3737 to phenylalanine 3757 traverse the membrane as a helical segment. The Cytoplasmic portion of the chain corresponds to histidine 3758 to arginine 3772. Residues tryptophan 3773–asparagine 3793 traverse the membrane as a helical segment. Topologically, residues serine 3794–arginine 3895 are extracellular. A helical membrane pass occupies residues alanine 3896–histidine 3916. The Cytoplasmic segment spans residues histidine 3917 to leucine 3921. Residues leucine 3922–isoleucine 3942 form a helical membrane-spanning segment. At threonine 3943–serine 3950 the chain is on the extracellular side. Residues threonine 3951–cysteine 3971 traverse the membrane as a helical segment. The Cytoplasmic portion of the chain corresponds to lysine 3972–serine 4367. In terms of domain architecture, Guanylate cyclase 2 spans threonine 4024–glutamate 4159. The Mg(2+) site is built by aspartate 4029, isoleucine 4030, and aspartate 4073. A disordered region spans residues alanine 4292–serine 4367. Residues aspartate 4333–arginine 4344 are compositionally biased toward basic and acidic residues. The span at aspartate 4356–serine 4367 shows a compositional bias: polar residues.

It in the N-terminal section; belongs to the cation transport ATPase (P-type) (TC 3.A.3) family. Type IV subfamily. The protein in the C-terminal section; belongs to the adenylyl cyclase class-4/guanylyl cyclase family. As to quaternary structure, interacts with chaperone CDC50.1; the interaction regulates guanylate cyclase GC trafficking and sensing environmental changes. Interacts with UGO; the interaction regulates guanylate cyclase GC trafficking and catalytic activity. Requires Mg(2+) as cofactor. Mn(2+) is required as a cofactor.

It localises to the cell membrane. It carries out the reaction GTP = 3',5'-cyclic GMP + diphosphate. Its function is as follows. Catalyzes the synthesis of the second messenger cGMP from GTP. During the tachyzoite lytic growth cycle in host cells, detects and transduces environmental changes in potassium, phosphatidic acid and pH levels. By producing cGMP in response to these environmental changes, activates PKG and thereby regulates PKG-dependent microneme secretion which is essential for tachyzoite motility, host cell attachment invasion of and egress from host cells. May play a role in the fission of connected tachyzoites at their basal pole during egress. Does not display flippase activity towards phosphatidylserine, phosphatidic acid or phosphatidylcholine. This is Guanylate cyclase from Toxoplasma gondii (strain ATCC 50853 / GT1).